The sequence spans 467 residues: Pancreatic lipase-related protein 3 (467 aa).

An N-terminal signal peptide occupies residues 1-17 (MLGIWIVAFLFFGTSRG). A disulfide bond links cysteine 21 and cysteine 27. The N-linked (GlcNAc...) asparagine glycan is linked to asparagine 74. An intrachain disulfide couples cysteine 107 to cysteine 118. Residue asparagine 125 is glycosylated (N-linked (GlcNAc...) asparagine). Residue serine 168 is the Nucleophile of the active site. Aspartate 191 functions as the Charge relay system in the catalytic mechanism. An intrachain disulfide couples cysteine 252 to cysteine 277. Residue histidine 279 is the Charge relay system of the active site. Cystine bridges form between cysteine 301–cysteine 312, cysteine 315–cysteine 320, and cysteine 451–cysteine 467. The region spanning 355-467 (WRHKLSVKLS…PNILQNLKPC (113 aa)) is the PLAT domain.

The protein belongs to the AB hydrolase superfamily. Lipase family. Overexpressed in hepatocellular carcinoma.

It localises to the secreted. It carries out the reaction a triacylglycerol + H2O = a diacylglycerol + a fatty acid + H(+). The sequence is that of Pancreatic lipase-related protein 3 (PNLIPRP3) from Homo sapiens (Human).